An 868-amino-acid chain; its full sequence is Leucine--tRNA ligase (868 aa).

Positions 42-52 (PYPSGKLHMGH) match the 'HIGH' region motif. The short motif at 624–628 (TMSKS) is the 'KMSKS' region element. ATP is bound at residue K627.

Belongs to the class-I aminoacyl-tRNA synthetase family.

Its subcellular location is the cytoplasm. It catalyses the reaction tRNA(Leu) + L-leucine + ATP = L-leucyl-tRNA(Leu) + AMP + diphosphate. In Nitrosomonas eutropha (strain DSM 101675 / C91 / Nm57), this protein is Leucine--tRNA ligase.